We begin with the raw amino-acid sequence, 859 residues long: MVRHFPINDQSLLPAHFGFWPGNSTTPGEVSNRVFSPKIPVVCRKLHSKQPFGMFKGENAMNYAFSTFLIEAIIIIFFIKVVSIALRPFRQPRIVSEIIGGMMIGPSMFGGIRNFNYYLFPPIANYICANIGLMGFFYFLFLTAAKTDVGAIGKAPRKHKYIAAIGVIVPIICVGSVGMAMRDQMDENLQKPSSIGGVVFALSFTSFPVIYTVLRDMNLLNSEVGKFAMSVALLGDMAGVYVIVIFEAMTHADVGGAYSVFWFLVSVVIFAAFMLLVVRRAFDWIVSQTPEGTLVNQNYIVMILMGVLASCFLTDMFGLSIAVGPIWLGLLVPHGPPLGSTLAVRSETFIYEFLMPFTYALVGQGTNIHFLRDETWRNQLSPLFYMTVVGFITKFLSTAFAALFFKVPARESITLGLMMNLRGQMDLLVYLHWIDKRIVGFPGYTVMVLHTVVVTAVTTPLINFFYDPTRPYRSSKHRTIQHTPQNTEMGLVLAVSDHETLSGLITFLDFAYPTKSSPLSIFAVQLVELAGRATPLFIDHEQRKEEEEEEYEEEEEEPERKQSGRIDQVQSAFKLYEEKRNECVTLRSYTAHAPKRLMYQDICELALGKKTAFILLPYQKERLEDAAPTELRDSGMLSVNADVLEHTPCSVCIYFDKGRLKNAVVRLSMDLQHSTNSIRMRQETYRFVVLFLGGADNREALHLADRMSTNPDVTLTVIRFLSYNHEGEDEREKKLDDGVVTWFWVKNESNERVSYKEVVVKNGAETLAAIQAMNVNDYDLWITGRREGINPKILEGLSTWSEDHQLGVIGDTVAASVFASEGSVLVVQQQVRNQKGGDGFLNGKFDYKRFLSPWSHSHN.

Transmembrane regions (helical) follow at residues 64–84 (AFST…VVSI), 92–112 (PRIV…FGGI), 122–142 (PIAN…FLFL), 161–181 (YIAA…GMAM), 194–214 (SIGG…YTVL), 227–247 (FAMS…VIFE), 258–278 (YSVF…LLVV), 291–311 (EGTL…LASC), 312–332 (FLTD…GLLV), 348–368 (TFIY…GTNI), 384–404 (FYMT…AALF), and 438–458 (IVGF…TAVT). The interval 538-566 (IDHEQRKEEEEEEYEEEEEEPERKQSGRI) is disordered. Residues 546 to 557 (EEEEEYEEEEEE) are compositionally biased toward acidic residues. Position 857 is a phosphoserine (Ser857).

Belongs to the monovalent cation:proton antiporter 2 (CPA2) transporter (TC 2.A.37) family. CHX (TC 2.A.37.4) subfamily. As to expression, specifically expressed in pollen.

The protein resides in the membrane. May operate as a cation/H(+) antiporter. The chain is Cation/H(+) antiporter 24 (CHX24) from Arabidopsis thaliana (Mouse-ear cress).